The sequence spans 323 residues: Cytochrome c biogenesis protein CcsA (323 aa).

A run of 8 helical transmembrane segments spans residues 9-29 (ILTH…LLNL), 45-62 (MMAT…RWIY), 71-91 (LYES…VPYF), 98-118 (LSAI…SGLL), 143-163 (MLLG…LLVI), 227-247 (IISL…VWAN), 261-275 (TWAF…IYLH), and 285-305 (VGPA…YFGV).

This sequence belongs to the CcmF/CycK/Ccl1/NrfE/CcsA family. As to quaternary structure, may interact with Ccs1.

The protein localises to the plastid. The protein resides in the chloroplast thylakoid membrane. Required during biogenesis of c-type cytochromes (cytochrome c6 and cytochrome f) at the step of heme attachment. This Calycanthus floridus var. glaucus (Eastern sweetshrub) protein is Cytochrome c biogenesis protein CcsA.